The following is a 69-amino-acid chain: DNA-directed RNA polymerase subunit omega (69 aa).

It belongs to the RNA polymerase subunit omega family. In terms of assembly, the RNAP catalytic core consists of 2 alpha, 1 beta, 1 beta' and 1 omega subunit. When a sigma factor is associated with the core the holoenzyme is formed, which can initiate transcription.

The enzyme catalyses RNA(n) + a ribonucleoside 5'-triphosphate = RNA(n+1) + diphosphate. Functionally, promotes RNA polymerase assembly. Latches the N- and C-terminal regions of the beta' subunit thereby facilitating its interaction with the beta and alpha subunits. The protein is DNA-directed RNA polymerase subunit omega of Exiguobacterium sp. (strain ATCC BAA-1283 / AT1b).